We begin with the raw amino-acid sequence, 840 residues long: Phosphatidylinositol-3-phosphatase myotubularin-1 (840 aa).

The tract at residues 1 to 28 (MTPPRPPSGRVRSLRDYSSESEKMDGTG) is disordered. The segment covering 13–25 (SLRDYSSESEKMD) has biased composition (basic and acidic residues). The 68-residue stretch at 45–112 (GSFSNLSCLL…ATIEKFNKMV (68 aa)) folds into the GRAM domain. The Myotubularin phosphatase domain maps to 199 to 650 (GKSSIRASMD…LAPTLWPQFH (452 aa)). Residues 332–335 (NGAM), 357–358 (NI), 443–449 (CSDGWDR), and arginine 489 contribute to the substrate site. The active-site Phosphocysteine intermediate is cysteine 443. The interval 506–535 (QSSSAGSFPSSPVRQSSGSAASQSSSSSHG) is disordered. Residues 507–535 (SSSAGSFPSSPVRQSSGSAASQSSSSSHG) show a composition bias toward low complexity. Positions 666–734 (VQCRAMTVKY…AALTRAVQSL (69 aa)) form a coiled coil. The interval 745–771 (VEDDPRSSLENNPRRRNRHGNNSDVSV) is disordered.

This sequence belongs to the protein-tyrosine phosphatase family. Non-receptor class myotubularin subfamily. As to expression, mostly expressed in siliques and leaves (including hydathodes), and, to a lower extent, in flowers and roots.

It localises to the cytoplasm. The protein localises to the endosome membrane. The catalysed reaction is a 1,2-diacyl-sn-glycero-3-phospho-(1D-myo-inositol-3-phosphate) + H2O = a 1,2-diacyl-sn-glycero-3-phospho-(1D-myo-inositol) + phosphate. The enzyme catalyses a 1,2-diacyl-sn-glycero-3-phospho-(1D-myo-inositol-3,5-bisphosphate) + H2O = a 1,2-diacyl-sn-glycero-3-phospho-(1D-myo-inositol-5-phosphate) + phosphate. Its function is as follows. Phosphatase with phosphoinositide 3'-phosphatase activity that can use phosphatidylinositol-3-phosphate (PtdIns3P) and phosphatidylinositol-3,5-diphosphate (PtdIns3,5P(2)) as substrates and produces phosphatidylinositol-5-phosphate (PtdIns5P); participates in pathway(s) that transfer gene regulatory signals to the nucleus. Required for recovery after water deprivation, via the accumulation of PtdIns5P upon dehydration; high PtdIns5P levels mediate ATX1 cytoplasmic localization, thus down-regulating the expression of ATX1-dependent genes. Confers sensitivity to soil-water-deficit stress. This chain is Phosphatidylinositol-3-phosphatase myotubularin-1 (MTM1), found in Arabidopsis thaliana (Mouse-ear cress).